A 247-amino-acid polypeptide reads, in one-letter code: Small ribosomal subunit protein uS3 (247 aa).

A KH type-2 domain is found at I39–K111. The interval E221–N247 is disordered. Basic and acidic residues predominate over residues R236 to N247.

This sequence belongs to the universal ribosomal protein uS3 family. Part of the 30S ribosomal subunit. Forms a tight complex with proteins S10 and S14.

Binds the lower part of the 30S subunit head. Binds mRNA in the 70S ribosome, positioning it for translation. This Metamycoplasma arthritidis (strain 158L3-1) (Mycoplasma arthritidis) protein is Small ribosomal subunit protein uS3.